We begin with the raw amino-acid sequence, 396 residues long: MLSPALLKVSLNRRSSAPVPQDEKMMFHSRNRAASYLQPMIEDQELIGFNRDRRRSSGSIIVDSFELGNASPSRRGSIASGIPMDKKTRRKLSNPVSLHQYTEDPTLAWEMLKEKRPVKPVRQMRLDTPVKPDHVRFVCIGCTHGEQFDISKLPPGDVLLVAGDFTSCGLPNEVHNFNKLLGKLKYSYKVVIGGNHECTFDDTFLKLKQESEPKEMALKQALLSAIHSDSKGGISAKDLLSNAIYLEDNVIELFGITIYGTPWQPKVDNWAFNLSRGQQLLDKWNLIPAGVDVLLTHTPPLGHGDMMNNGQRMGCAELLNTVFKRVRPKYHVFGHIHEGYGCTTDGYTKFINCCMCNENLDLKNEPVIFDIPVHPHTKQFYIQNVKKIHKRFQKKK.

Residues 73–94 form a disordered region; it reads SRRGSIASGIPMDKKTRRKLSN.

It belongs to the UPF0046 family.

This chain is UPF0046 protein T07D4.2, found in Caenorhabditis elegans.